The following is a 430-amino-acid chain: tRNA(Ile)-lysidine synthase (430 aa).

21–26 contributes to the ATP binding site; sequence SGGLDS.

This sequence belongs to the tRNA(Ile)-lysidine synthase family.

It is found in the cytoplasm. The enzyme catalyses cytidine(34) in tRNA(Ile2) + L-lysine + ATP = lysidine(34) in tRNA(Ile2) + AMP + diphosphate + H(+). In terms of biological role, ligates lysine onto the cytidine present at position 34 of the AUA codon-specific tRNA(Ile) that contains the anticodon CAU, in an ATP-dependent manner. Cytidine is converted to lysidine, thus changing the amino acid specificity of the tRNA from methionine to isoleucine. The chain is tRNA(Ile)-lysidine synthase from Salmonella typhi.